Consider the following 220-residue polypeptide: Large ribosomal subunit protein bL21c (220 aa).

Belongs to the bacterial ribosomal protein bL21 family. Part of the 50S ribosomal subunit.

Its subcellular location is the plastid. It localises to the chloroplast. Its function is as follows. This protein binds to 23S ribosomal RNA in the presence of protein L20. This is Large ribosomal subunit protein bL21c (RPL21) from Arabidopsis thaliana (Mouse-ear cress).